The following is a 1162-amino-acid chain: Nucleoporin nup132 (1162 aa).

This sequence belongs to the nucleoporin Nup133 family. Component of the npc107-120 complex which consists of nup85, nup107, nup120, nup131, nup132 and seh1. Interacts with nup107.

The protein localises to the nucleus envelope. Functionally, functions as a component of the nuclear pore complex (NPC). NPC components, collectively referred to as nucleoporins (NUPs), can play the role of both NPC structural components and of docking or interaction partners for transiently associated nuclear transport factors. Active directional transport is assured by both, a Phe-Gly (FG) repeat affinity gradient for these transport factors across the NPC and a transport cofactor concentration gradient across the nuclear envelope. In Schizosaccharomyces pombe (strain 972 / ATCC 24843) (Fission yeast), this protein is Nucleoporin nup132 (nup132).